We begin with the raw amino-acid sequence, 69 residues long: Peptide Hact-1 (69 aa).

Residues 1–21 (MDRKFHLCLLLVILGTIIVQG) form the signal peptide. The propeptide occupies 22-57 (APLENENDADPDKPQKYRYYLKRATTEKKDNDPAKP). Residues Cys-59 and Cys-68 are joined by a disulfide bond.

Tentacle (ecto and/or endoderm tissue), and possibly also nematoblasts.

It localises to the secreted. The protein resides in the nematocyst. Functionally, peptide with unknown function. Has a limited effect on human peripheral blood mononuclear cells. Does not show activity against both Gram-positive and Gram-negative bacteria nor is it active on the 26 voltage-gated ion channels tested. The protein is Peptide Hact-1 of Heliofungia actiniformis (Mushroom coral).